The primary structure comprises 130 residues: UPF0146 protein AF_0739.1 (130 aa).

The protein belongs to the UPF0146 family.

This is UPF0146 protein AF_0739.1 from Archaeoglobus fulgidus (strain ATCC 49558 / DSM 4304 / JCM 9628 / NBRC 100126 / VC-16).